A 200-amino-acid chain; its full sequence is Protein GrpE (200 aa).

Positions 1–23 are enriched in acidic residues; sequence MEEEIKETSEDKEEENTEAEAVE. The tract at residues 1-39 is disordered; it reads MEEEIKETSEDKEEENTEAEAVENNEKSEENAGNVEEDE.

This sequence belongs to the GrpE family. In terms of assembly, homodimer.

The protein localises to the cytoplasm. In terms of biological role, participates actively in the response to hyperosmotic and heat shock by preventing the aggregation of stress-denatured proteins, in association with DnaK and GrpE. It is the nucleotide exchange factor for DnaK and may function as a thermosensor. Unfolded proteins bind initially to DnaJ; upon interaction with the DnaJ-bound protein, DnaK hydrolyzes its bound ATP, resulting in the formation of a stable complex. GrpE releases ADP from DnaK; ATP binding to DnaK triggers the release of the substrate protein, thus completing the reaction cycle. Several rounds of ATP-dependent interactions between DnaJ, DnaK and GrpE are required for fully efficient folding. The chain is Protein GrpE from Brachyspira hyodysenteriae (strain ATCC 49526 / WA1).